The following is a 331-amino-acid chain: Adenosine deaminase (331 aa).

Residues His-12 and His-14 each contribute to the Zn(2+) site. 3 residues coordinate substrate: His-14, Asp-16, and Gly-170. His-197 contributes to the Zn(2+) binding site. Catalysis depends on Glu-200, which acts as the Proton donor. Position 278 (Asp-278) interacts with Zn(2+). Residue Asp-279 coordinates substrate.

The protein belongs to the metallo-dependent hydrolases superfamily. Adenosine and AMP deaminases family. Adenosine deaminase subfamily. Zn(2+) is required as a cofactor.

It carries out the reaction adenosine + H2O + H(+) = inosine + NH4(+). The catalysed reaction is 2'-deoxyadenosine + H2O + H(+) = 2'-deoxyinosine + NH4(+). Its function is as follows. Catalyzes the hydrolytic deamination of adenosine and 2-deoxyadenosine. This Shewanella sp. (strain ANA-3) protein is Adenosine deaminase.